A 184-amino-acid polypeptide reads, in one-letter code: dTTP/UTP pyrophosphatase (184 aa).

Residue aspartate 67 is the Proton acceptor of the active site.

The protein belongs to the Maf family. YhdE subfamily. It depends on a divalent metal cation as a cofactor.

It is found in the cytoplasm. The catalysed reaction is dTTP + H2O = dTMP + diphosphate + H(+). It carries out the reaction UTP + H2O = UMP + diphosphate + H(+). In terms of biological role, nucleoside triphosphate pyrophosphatase that hydrolyzes dTTP and UTP. May have a dual role in cell division arrest and in preventing the incorporation of modified nucleotides into cellular nucleic acids. This chain is dTTP/UTP pyrophosphatase, found in Elusimicrobium minutum (strain Pei191).